The chain runs to 78 residues: Major outer membrane lipoprotein Lpp (78 aa).

The first 20 residues, 1–20, serve as a signal peptide directing secretion; it reads MKATKLVLGAVILGSTLLAG. A lipid anchor (N-palmitoyl cysteine) is attached at C21. C21 is lipidated: S-diacylglycerol cysteine. 2 repeats span residues 24–34 and 38–48; these read NAKIDQLSSDV and NAKVDQLSNDV. Residues 27 to 75 are a coiled coil; sequence IDQLSSDVQTLNAKVDQLSNDVNAMRSDVQAAKDDAARANQRLDNMATK. K78 carries the N6-murein peptidoglycan lysine modification.

The protein belongs to the Lpp family. Homotrimer.

It is found in the cell outer membrane. The protein localises to the secreted. The protein resides in the cell wall. In terms of biological role, a highly abundant outer membrane lipoprotein that controls the distance between the inner and outer membranes. The only protein known to be covalently linked to the peptidoglycan network (PGN). Also non-covalently binds the PGN. The link between the cell outer membrane and PGN contributes to maintenance of the structural and functional integrity of the cell envelope, and maintains the correct distance between the PGN and the outer membrane. This chain is Major outer membrane lipoprotein Lpp, found in Shigella flexneri.